The following is a 237-amino-acid chain: Small ribosomal subunit protein eS4 (237 aa).

The S4 RNA-binding domain maps to 38–110 (LPLAVVVRDV…EAKYYDLKPI (73 aa)).

This sequence belongs to the eukaryotic ribosomal protein eS4 family.

The chain is Small ribosomal subunit protein eS4 from Pyrobaculum calidifontis (strain DSM 21063 / JCM 11548 / VA1).